A 255-amino-acid chain; its full sequence is F-box/SPRY domain-containing protein 1 (255 aa).

An F-box domain is found at 3–51; it reads DPVAALCNYNVLEVIFSYLELEDLSHCSQVCKSWYHFLNDENSDVWRWH. The B30.2/SPRY domain occupies 61 to 253; sequence LKSDLLSSVS…VSMVYLGTPL (193 aa).

This sequence belongs to the FBXO45/Fsn family. Component of an E3 ubiquitin ligase complex composed of hiw and Fsn.

It localises to the synapse. It functions in the pathway protein modification; protein ubiquitination. Required in the presynaptic motoneuron to down-regulate the levels of wnd and restrain synaptic terminal growth at the neuromuscular junction (NMJ). The polypeptide is F-box/SPRY domain-containing protein 1 (Drosophila erecta (Fruit fly)).